Reading from the N-terminus, the 36-residue chain is Kappa-theraphotoxin-Aa1a (36 aa).

3 cysteine pairs are disulfide-bonded: Cys3–Cys18, Cys10–Cys23, and Cys17–Cys30. The residue at position 36 (Ile36) is an Isoleucine amide.

The protein belongs to the neurotoxin 10 (Hwtx-1) family. Expressed by the venom gland.

Its subcellular location is the secreted. Selective inhibitor of voltage-gated potassium channel Kv10.1/KCNH1/EAG1 (IC(50)=637 nM). It acts by shifting the voltage dependence of channel activation in a depolarising direction. It shows a 100% inhibition at saturating concentrations, shows fast on-rates and is reversible. It also slightly affects channel inactivation, when the membrane is highly depolarised (&gt;+80 mV). This chain is Kappa-theraphotoxin-Aa1a, found in Avicularia aurantiaca (Yellow-banded pinktoe tarantula).